The sequence spans 355 residues: Probable butyrate kinase (355 aa).

The protein belongs to the acetokinase family.

The protein resides in the cytoplasm. The enzyme catalyses butanoate + ATP = butanoyl phosphate + ADP. The protein is Probable butyrate kinase of Listeria innocua serovar 6a (strain ATCC BAA-680 / CLIP 11262).